The following is a 1774-amino-acid chain: U3 small nucleolar RNA-associated protein 10 (1774 aa).

The segment at 1206–1226 (YDKHSSAGSNDEEAGSESEAE) is disordered. The span at 1215-1226 (NDEEAGSESEAE) shows a compositional bias: acidic residues. The stretch at 1734-1772 (LVPIIAELLEDEDEEVEYEVRSGLVKVVESVMGEPFDRY) is one HEAT repeat.

The protein belongs to the HEATR1/UTP10 family. Component of the ribosomal small subunit (SSU) processome.

It is found in the nucleus. Its subcellular location is the nucleolus. Its function is as follows. Involved in nucleolar processing of pre-18S ribosomal RNA. Involved in ribosome biosynthesis. This chain is U3 small nucleolar RNA-associated protein 10, found in Kluyveromyces lactis (strain ATCC 8585 / CBS 2359 / DSM 70799 / NBRC 1267 / NRRL Y-1140 / WM37) (Yeast).